Reading from the N-terminus, the 427-residue chain is Glutamate-1-semialdehyde 2,1-aminomutase (427 aa).

Lysine 265 carries the post-translational modification N6-(pyridoxal phosphate)lysine.

The protein belongs to the class-III pyridoxal-phosphate-dependent aminotransferase family. HemL subfamily. In terms of assembly, homodimer. Pyridoxal 5'-phosphate serves as cofactor.

It localises to the cytoplasm. The catalysed reaction is (S)-4-amino-5-oxopentanoate = 5-aminolevulinate. It functions in the pathway porphyrin-containing compound metabolism; protoporphyrin-IX biosynthesis; 5-aminolevulinate from L-glutamyl-tRNA(Glu): step 2/2. This chain is Glutamate-1-semialdehyde 2,1-aminomutase, found in Burkholderia mallei (strain NCTC 10229).